Consider the following 155-residue polypeptide: Transcriptional regulator MraZ (155 aa).

2 SpoVT-AbrB domains span residues 7 to 63 (REQH…EPSV) and 92 to 135 (LDQT…EPLR).

The protein belongs to the MraZ family. In terms of assembly, forms oligomers.

The protein localises to the cytoplasm. Its subcellular location is the nucleoid. This Chlorobaculum tepidum (strain ATCC 49652 / DSM 12025 / NBRC 103806 / TLS) (Chlorobium tepidum) protein is Transcriptional regulator MraZ.